The primary structure comprises 504 residues: MEEFQGYLELDIFRQHDFLYPLIFREYSYALAHGHGLNRYMLLENIGYDNKSSLLIVKRLITTMYQQNYLIISANDSKQNPFFGYNKNLHSKILSEGFAIIVEIPFYLRLISSLEGAEIVRFYNLRSIHSIFPFLEEKFPHLNYSADILIPYPAHLEILVQTLRYRVKDASYLHLLRFFLHEYSNCNSLIITNKSISIFSKSNPRFFLFLYNSYICEYESIFLFLRNQSSHLRLTSSGVLFERLCLYRKIEHFAEVFANDFPVIPCFLKDPFMHYVRYQGKSILASKDTPLLMNKWKSYLVNLWQCHFDVWSHAASIRINQLSKHSLDFLSYFSSVRRNPAVVRNQMLENSFLLNNAPNKLDTIVPIIPLIGSLAKAKFCNAVGHPISKLTRADLSDFEIINRFLHICRNLSHYYSGSSKKKNMYRIKYILRLSCVKTLARKHKSTARAFLKRVDSEFFQEFFTEEGGFISLIFPRASFALRRLYSGRVWYLDIIFINGLSNHE.

It belongs to the intron maturase 2 family. MatK subfamily.

The protein resides in the plastid. It is found in the chloroplast. Usually encoded in the trnK tRNA gene intron. Probably assists in splicing its own and other chloroplast group II introns. The chain is Maturase K from Quercus lyrata (Overcup oak).